The chain runs to 127 residues: Small ribosomal subunit protein uS13 (127 aa).

A compositionally biased stretch (basic residues) spans 96–118 (LPVRGQRTHTNARTRKGPKRGIV). Positions 96–127 (LPVRGQRTHTNARTRKGPKRGIVRAKPAAPAR) are disordered.

This sequence belongs to the universal ribosomal protein uS13 family. Part of the 30S ribosomal subunit. Forms a loose heterodimer with protein S19. Forms two bridges to the 50S subunit in the 70S ribosome.

In terms of biological role, located at the top of the head of the 30S subunit, it contacts several helices of the 16S rRNA. In the 70S ribosome it contacts the 23S rRNA (bridge B1a) and protein L5 of the 50S subunit (bridge B1b), connecting the 2 subunits; these bridges are implicated in subunit movement. Contacts the tRNAs in the A and P-sites. This Myxococcus xanthus (strain DK1622) protein is Small ribosomal subunit protein uS13.